The following is a 71-amino-acid chain: Delta-actitoxin-Avd2b 2 (71 aa).

A signal peptide spans methionine 1–alanine 20. Residues asparagine 21–glycine 41 constitute a propeptide that is removed on maturation. Cystine bridges form between cysteine 46-cysteine 61, cysteine 47-cysteine 55, and cysteine 49-cysteine 66.

It belongs to the sea anemone short toxin (type III) family.

Its subcellular location is the secreted. It is found in the nematocyst. In terms of biological role, voltage-gated sodium channel (Nav) inhibitor. 1 uM completely inhibits insect voltage-gated sodium channel inactivation (DmNav1 from D.melanogaster). The polypeptide is Delta-actitoxin-Avd2b 2 (Anemonia viridis (Snakelocks anemone)).